We begin with the raw amino-acid sequence, 461 residues long: Zinc finger protein ZFP2 (461 aa).

13 consecutive C2H2-type zinc fingers follow at residues 102 to 124, 130 to 152, 158 to 180, 186 to 208, 214 to 236, 242 to 264, 270 to 292, 298 to 320, 326 to 348, 354 to 376, 382 to 404, 410 to 432, and 438 to 460; these read YECNQCSKTFSQSSSLLKHQRIH, YKCNVCGKHFIERSSLTVHQRIH, YKCNECGKAFSQSMNLTVHQRTH, YQCKECGKAFHKNSSLIQHERIH, YKCNECGKAFTQSMNLTVHQRTH, YECNECGKAFSQSMHLIVHQRSH, YECSQCGKAFSKSSTLTLHQRNH, YKCNKCGKSFSQSTYLIEHQRLH, FECNECGKAFSKNSSLTQHRRIH, YECMVCGKHFTGRSSLTVHQVIH, YECNECGKAFSQSAYLIEHQRIH, YECDQCGKAFIKNSSLTVHQRTH, and YQCNECGKAFSRSTNLTRHQRTH.

Belongs to the krueppel C2H2-type zinc-finger protein family.

Its subcellular location is the nucleus. Probable transcription factor involved in neuronal differentiation and/or phenotypic maintenance. The sequence is that of Zinc finger protein ZFP2 (ZFP2) from Homo sapiens (Human).